The chain runs to 409 residues: Dual-specificity RNA methyltransferase RlmN (409 aa).

The Proton acceptor role is filled by glutamate 117. Positions 128–377 (LNGRKTLCIS…CTIRQTRGDD (250 aa)) constitute a Radical SAM core domain. Cysteines 135 and 382 form a disulfide. Positions 142, 146, and 149 each coordinate [4Fe-4S] cluster. S-adenosyl-L-methionine is bound by residues 205–206 (GE), serine 237, 259–261 (SLH), and asparagine 339. Cysteine 382 (S-methylcysteine intermediate) is an active-site residue.

It belongs to the radical SAM superfamily. RlmN family. It depends on [4Fe-4S] cluster as a cofactor.

It is found in the cytoplasm. The catalysed reaction is adenosine(2503) in 23S rRNA + 2 reduced [2Fe-2S]-[ferredoxin] + 2 S-adenosyl-L-methionine = 2-methyladenosine(2503) in 23S rRNA + 5'-deoxyadenosine + L-methionine + 2 oxidized [2Fe-2S]-[ferredoxin] + S-adenosyl-L-homocysteine. It catalyses the reaction adenosine(37) in tRNA + 2 reduced [2Fe-2S]-[ferredoxin] + 2 S-adenosyl-L-methionine = 2-methyladenosine(37) in tRNA + 5'-deoxyadenosine + L-methionine + 2 oxidized [2Fe-2S]-[ferredoxin] + S-adenosyl-L-homocysteine. Its function is as follows. Specifically methylates position 2 of adenine 2503 in 23S rRNA and position 2 of adenine 37 in tRNAs. m2A2503 modification seems to play a crucial role in the proofreading step occurring at the peptidyl transferase center and thus would serve to optimize ribosomal fidelity. In Psychrobacter arcticus (strain DSM 17307 / VKM B-2377 / 273-4), this protein is Dual-specificity RNA methyltransferase RlmN.